We begin with the raw amino-acid sequence, 273 residues long: MSDMHSLLIAAILGVVEGLTEFLPVSSTGHMIIVGHLLGFEGDTAKTFEVVIQLGSILAVVVMFWRRLFGLIGIHFGRPLQREGESKGRLTLIHILLGMIPAVVLGLVFHDTIKSLFNPINVMYTLVVGGLLLIAAECLKPKEPRAPGLDDMTYRQAFMIGCFQCLALWPGFSRSGATISGGMLMGVSRYAASEFSFLLAVPMMMGATVLDLYKSWSFLTAADIPMFAVGFVTAFVVALIAIKTFLQLIKRISFIPFAIYRFVVAAAVYVVFF.

A run of 7 helical transmembrane segments spans residues 6–26 (SLLI…LPVS), 45–65 (AKTF…VMFW), 90–110 (LTLI…LVFH), 116–136 (LFNP…LIAA), 190–210 (YAAS…ATVL), 222–242 (ADIP…LIAI), and 252–272 (ISFI…YVVF).

Belongs to the UppP family.

The protein localises to the cell inner membrane. It catalyses the reaction di-trans,octa-cis-undecaprenyl diphosphate + H2O = di-trans,octa-cis-undecaprenyl phosphate + phosphate + H(+). Its function is as follows. Catalyzes the dephosphorylation of undecaprenyl diphosphate (UPP). Confers resistance to bacitracin. This chain is Undecaprenyl-diphosphatase, found in Salmonella paratyphi C (strain RKS4594).